We begin with the raw amino-acid sequence, 425 residues long: Putative nucleoside transporter YegT (425 aa).

Over 1–8 the chain is Periplasmic; sequence MKTTAKLS. Residues 9-29 traverse the membrane as a helical segment; the sequence is FMMFVEWFIWGAWFVPLWLWL. Residues 30 to 38 are Cytoplasmic-facing; the sequence is SKSGFSAGE. A helical membrane pass occupies residues 39–59; it reads IGWSYACTAIAAILSPILVGS. The Periplasmic portion of the chain corresponds to 60–63; the sequence is ITDR. A helical transmembrane segment spans residues 64 to 84; it reads FFSAQKVLAVLMFAGALLMYF. The Cytoplasmic portion of the chain corresponds to 85-90; sequence AAQQTT. The chain crosses the membrane as a helical span at residues 91–111; that stretch reads FAGFFPLLLAYSLTYMPTIAL. Residues 112–131 lie on the Periplasmic side of the membrane; sequence TNSIAFANVPDVERDFPRIR. The chain crosses the membrane as a helical span at residues 132–152; sequence VMGTIGWIASGLACGFLPQIL. Residues 153 to 161 lie on the Cytoplasmic side of the membrane; the sequence is GYADISPTN. The chain crosses the membrane as a helical span at residues 162–182; it reads IPLLITAGSSALLGVFAFFLP. Residues 183-210 are Periplasmic-facing; it reads DTPPKSTGKMDIKVMLGLDALILLRDKN. The chain crosses the membrane as a helical span at residues 211 to 231; it reads FLVFFFCSFLFAMPLAFYYIF. The Cytoplasmic segment spans residues 232-244; the sequence is ANGYLTEVGMKNA. The chain crosses the membrane as a helical span at residues 245-265; sequence TGWMTLGQFSEIFFMLALPFF. Residues 266-287 are Periplasmic-facing; sequence TKRFGIKKVLLLGLVTAAIRYG. A helical membrane pass occupies residues 288 to 308; the sequence is FFIYGSADEYFTYALLFLGIL. At 309-339 the chain is on the cytoplasmic side; it reads LHGVSYDFYYVTAYIYVDKKAPVHMRTAAQG. Residues 340-360 form a helical membrane-spanning segment; that stretch reads LITLCCQGFGSLLGYRLGGVM. Topologically, residues 361 to 379 are periplasmic; sequence MEKMFAYQEPVNGLTFNWS. The chain crosses the membrane as a helical span at residues 380-400; sequence GMWTFGAVMIAIIAVLFMIFF. Residues 401–425 lie on the Cytoplasmic side of the membrane; that stretch reads RESDNEITAIKVDDRDIALTQGEVK.

Belongs to the major facilitator superfamily. Nucleoside:H(+) symporter (NHS) (TC 2.A.1.10) family.

It is found in the cell inner membrane. Could be involved in nucleoside transport. This chain is Putative nucleoside transporter YegT (yegT), found in Escherichia coli (strain K12).